We begin with the raw amino-acid sequence, 536 residues long: Pre-mRNA-splicing factor SLU7-B (536 aa).

The tract at residues 1–42 is disordered; it reads MATASVAFKSREDHRKKLELEEARKAGLAPAEVDEDGKEINP. Over residues 9–25 the composition is skewed to basic and acidic residues; sequence KSREDHRKKLELEEARK. A CCHC-type zinc finger spans residues 96–109; the sequence is CINCGAMTHSSKAC. 2 disordered regions span residues 176 to 201 and 488 to 507; these read LKKLEEKNNNENGDDATSDGEEDLDD and KEDLSRREEKDERKRKYNVN. Residues 187–200 are compositionally biased toward acidic residues; the sequence is NGDDATSDGEEDLD. At serine 193 the chain carries Phosphoserine. A Nuclear localization signal motif is present at residues 486-493; sequence LKKEDLSR. Residues 488 to 501 show a composition bias toward basic and acidic residues; sequence KEDLSRREEKDERK.

This sequence belongs to the SLU7 family. Interacts with PHYB in photobodies under red light.

It is found in the nucleus. In terms of biological role, participates in the second catalytic step of pre-mRNA splicing, when the free hydroxyl group of exon I attacks the 3'-splice site to generate spliced mRNA and the excised lariat intron. Splicing factor acting as a negative regulator of seedling photomorphogenesis by antagonizing PHYB signaling to promote light-induced hypocotyl elongation. Prevents the accumulation of functionally spliced RVE8a form, a circadian clock regulator mediating the transcriptional activation of clock genes containing evening elements (EE), but promotes PIF4 expression to fine-tune hypocotyl elongation in the light. Together with SMP1, involved in the timing of cell cycle arrest during leaf development, in a STRUWWELPETER (SWP) dependent manner; promotes cell proliferation in developing organs. The chain is Pre-mRNA-splicing factor SLU7-B from Arabidopsis thaliana (Mouse-ear cress).